A 141-amino-acid polypeptide reads, in one-letter code: Hemoglobin subunit alpha-D (141 aa).

The 141-residue stretch at 1 to 141 (MLTEDDKQLI…VSAVLAEKYR (141 aa)) folds into the Globin domain. Positions 58 and 87 each coordinate heme b.

The protein belongs to the globin family. In terms of assembly, heterotetramer of two alpha-D chains and two beta chains. Red blood cells.

Functionally, involved in oxygen transport from the lung to the various peripheral tissues. The sequence is that of Hemoglobin subunit alpha-D (HBAD) from Chelonoidis niger (Galapagos giant tortoise).